We begin with the raw amino-acid sequence, 171 residues long: ATP synthase subunit b (171 aa).

The chain crosses the membrane as a helical span at residues isoleucine 24–isoleucine 44.

This sequence belongs to the ATPase B chain family. F-type ATPases have 2 components, F(1) - the catalytic core - and F(0) - the membrane proton channel. F(1) has five subunits: alpha(3), beta(3), gamma(1), delta(1), epsilon(1). F(0) has four main subunits: a(1), b(1), b'(1) and c(10-14). The alpha and beta chains form an alternating ring which encloses part of the gamma chain. F(1) is attached to F(0) by a central stalk formed by the gamma and epsilon chains, while a peripheral stalk is formed by the delta, b and b' chains.

The protein resides in the cellular thylakoid membrane. Its function is as follows. F(1)F(0) ATP synthase produces ATP from ADP in the presence of a proton or sodium gradient. F-type ATPases consist of two structural domains, F(1) containing the extramembraneous catalytic core and F(0) containing the membrane proton channel, linked together by a central stalk and a peripheral stalk. During catalysis, ATP synthesis in the catalytic domain of F(1) is coupled via a rotary mechanism of the central stalk subunits to proton translocation. In terms of biological role, component of the F(0) channel, it forms part of the peripheral stalk, linking F(1) to F(0). The protein is ATP synthase subunit b of Synechococcus sp. (strain WH7803).